The following is a 122-amino-acid chain: MSQISRKQQTQKRHRRLRRHITGTSDRPRLAVFRSNNHIYAQVIDDAAQSTLCSASTVDKELRTGLKAPAGSCDASVAVGELVAKRAMAKGIQQVVFDRGGNLYHGRIKALADAAREAGLQF.

The segment at Met-1 to Ser-25 is disordered. Positions Gln-9–Ile-21 are enriched in basic residues.

It belongs to the universal ribosomal protein uL18 family. As to quaternary structure, part of the 50S ribosomal subunit; part of the 5S rRNA/L5/L18/L25 subcomplex. Contacts the 5S and 23S rRNAs.

Its function is as follows. This is one of the proteins that bind and probably mediate the attachment of the 5S RNA into the large ribosomal subunit, where it forms part of the central protuberance. The sequence is that of Large ribosomal subunit protein uL18 from Synechococcus sp. (strain CC9605).